The primary structure comprises 227 residues: Ribonuclease 3 (227 aa).

The region spanning 4–133 (FETLEKLLGY…LIAAIYLDSN (130 aa)) is the RNase III domain. Position 46 (Glu46) interacts with Mg(2+). Asp50 is an active-site residue. Asn119 and Glu122 together coordinate Mg(2+). Glu122 is a catalytic residue. The DRBM domain maps to 158–226 (DPKTALQEWA…ARDLLHRLQD (69 aa)).

It belongs to the ribonuclease III family. In terms of assembly, homodimer. Requires Mg(2+) as cofactor.

The protein resides in the cytoplasm. The enzyme catalyses Endonucleolytic cleavage to 5'-phosphomonoester.. Functionally, digests double-stranded RNA. Involved in the processing of primary rRNA transcript to yield the immediate precursors to the large and small rRNAs (23S and 16S). Processes some mRNAs, and tRNAs when they are encoded in the rRNA operon. Processes pre-crRNA and tracrRNA of type II CRISPR loci if present in the organism. In Rickettsia akari (strain Hartford), this protein is Ribonuclease 3.